The chain runs to 337 residues: 4-hydroxyproline 2-epimerase 2 (337 aa).

Cysteine 90 acts as the Proton acceptor in catalysis. Residues 91–92, histidine 223, and aspartate 249 each bind substrate; that span reads GH. The active-site Proton donor is the cysteine 253. Substrate is bound at residue 254–255; the sequence is GT.

It belongs to the proline racemase family.

The catalysed reaction is trans-4-hydroxy-L-proline = cis-4-hydroxy-D-proline. Its function is as follows. Catalyzes the epimerization of trans-4-hydroxy-L-proline (t4LHyp) to cis-4-hydroxy-D-proline (c4DHyp). Is likely involved in a degradation pathway that converts t4LHyp to alpha-ketoglutarate. Can also catalyze the epimerization of trans-3-hydroxy-L-proline (t3LHyp) to cis-3-hydroxy-D-proline (c3DHyp), albeit with 170-fold lower efficiency. Displays no proline racemase activity. This Brucella anthropi (strain ATCC 49188 / DSM 6882 / CCUG 24695 / JCM 21032 / LMG 3331 / NBRC 15819 / NCTC 12168 / Alc 37) (Ochrobactrum anthropi) protein is 4-hydroxyproline 2-epimerase 2.